Reading from the N-terminus, the 315-residue chain is Olfactory receptor 5M10 (315 aa).

Over 1–25 the chain is Extracellular; it reads MLSPNHTIVTEFILLGLTDDPVLEK. An N-linked (GlcNAc...) asparagine glycan is attached at asparagine 5. Residues 26–46 form a helical membrane-spanning segment; sequence ILFGVFLAIYLITLAGNLCMI. Residues 47–54 lie on the Cytoplasmic side of the membrane; it reads LLIRTNSQ. The chain crosses the membrane as a helical span at residues 55–75; the sequence is LQTPMYFFLGHLSFVDICYSS. At 76-99 the chain is on the extracellular side; sequence NVTPNMLHNFLSEQKTISYAGCFT. A disulfide bond links cysteine 97 and cysteine 189. A helical membrane pass occupies residues 100–120; it reads QCLLFIALVITEFYFLASMAL. The Cytoplasmic portion of the chain corresponds to 121-139; it reads DRYVAICSPLHYSSRMSKN. The helical transmembrane segment at 140-160 threads the bilayer; it reads ICISLVTVPYMYGFLNGLSQT. Over 161 to 196 the chain is Extracellular; it reads LLTFHLSFCGSLEINHFYCADPPLIMLACSDTRVKK. A helical membrane pass occupies residues 197–217; that stretch reads MAMFVVAGFTLSSSLFIILLS. Over 218 to 237 the chain is Cytoplasmic; the sequence is YLFIFAAIFRIRSAEGRHKA. A helical transmembrane segment spans residues 238-258; the sequence is FSTCASHLTIVTLFYGTLFCM. Residues 259–271 lie on the Extracellular side of the membrane; the sequence is YVRPPSEKSVEES. The helical transmembrane segment at 272 to 292 threads the bilayer; that stretch reads KIIAVFYTFLSPMLNPLIYSL. Topologically, residues 293–315 are cytoplasmic; sequence RNRDVILAIQQMIRGKSFCKIAV.

The protein belongs to the G-protein coupled receptor 1 family.

It localises to the cell membrane. Functionally, odorant receptor. In Homo sapiens (Human), this protein is Olfactory receptor 5M10 (OR5M10).